The following is a 289-amino-acid chain: Dihydropteroate synthase (289 aa).

The Pterin-binding domain maps to threonine 28 to lysine 282. Asparagine 35 serves as a coordination point for Mg(2+). Residues threonine 75, aspartate 109, asparagine 128, aspartate 199, lysine 235, and arginine 270–histidine 272 each bind (7,8-dihydropterin-6-yl)methyl diphosphate.

The protein belongs to the DHPS family. The cofactor is Mg(2+).

It carries out the reaction (7,8-dihydropterin-6-yl)methyl diphosphate + 4-aminobenzoate = 7,8-dihydropteroate + diphosphate. The protein operates within cofactor biosynthesis; tetrahydrofolate biosynthesis; 7,8-dihydrofolate from 2-amino-4-hydroxy-6-hydroxymethyl-7,8-dihydropteridine diphosphate and 4-aminobenzoate: step 1/2. Catalyzes the condensation of para-aminobenzoate (pABA) with 6-hydroxymethyl-7,8-dihydropterin diphosphate (DHPt-PP) to form 7,8-dihydropteroate (H2Pte), the immediate precursor of folate derivatives. The protein is Dihydropteroate synthase (folP) of Synechocystis sp. (strain ATCC 27184 / PCC 6803 / Kazusa).